Here is a 182-residue protein sequence, read N- to C-terminus: MSRTRQVPSNTASSSHIQLLSPAVPQENHSTVRISGTLRLRAENDSIATDHIEGARPGRHIRWTEDVVDNEGLGKKSSKVCCIYHKPRPVGESSSESDDSTSSSSEPESDNDVDCRDSTGRAESHEQNAQDASQSPSNRSLNRGRTPSYTKRHAKRNGKRKPSPNAYEKMPKVKGQPRKTGM.

Residues 1-18 show a composition bias toward polar residues; sequence MSRTRQVPSNTASSSHIQ. 2 disordered regions span residues 1–30 and 76–182; these read MSRTRQVPSNTASSSHIQLLSPAVPQENHS and KSSK…KTGM. Residues 113–128 are compositionally biased toward basic and acidic residues; that stretch reads VDCRDSTGRAESHEQN. The segment covering 129–149 has biased composition (polar residues); the sequence is AQDASQSPSNRSLNRGRTPSY. Residues 150–162 show a composition bias toward basic residues; that stretch reads TKRHAKRNGKRKP.

This sequence belongs to the YPI1 family.

The protein localises to the nucleus. Functionally, regulator of type 1 phosphatases which maintains protein phosphatase activity under strict control. The protein is Type 1 phosphatases regulator ypi1 (ypi1) of Aspergillus fumigatus (strain CBS 144.89 / FGSC A1163 / CEA10) (Neosartorya fumigata).